A 39-amino-acid chain; its full sequence is Photosystem II reaction center protein J (39 aa).

The helical transmembrane segment at 7–27 (IPLWLVATIAGLGVIAVLGLF) threads the bilayer.

The protein belongs to the PsbJ family. In terms of assembly, PSII is composed of 1 copy each of membrane proteins PsbA, PsbB, PsbC, PsbD, PsbE, PsbF, PsbH, PsbI, PsbJ, PsbK, PsbL, PsbM, PsbT, PsbX, PsbY, PsbZ, Psb30/Ycf12, peripheral proteins PsbO, CyanoQ (PsbQ), PsbU, PsbV and a large number of cofactors. It forms dimeric complexes.

The protein localises to the cellular thylakoid membrane. Functionally, one of the components of the core complex of photosystem II (PSII). PSII is a light-driven water:plastoquinone oxidoreductase that uses light energy to abstract electrons from H(2)O, generating O(2) and a proton gradient subsequently used for ATP formation. It consists of a core antenna complex that captures photons, and an electron transfer chain that converts photonic excitation into a charge separation. The protein is Photosystem II reaction center protein J of Microcystis aeruginosa (strain NIES-843 / IAM M-2473).